Reading from the N-terminus, the 189-residue chain is Ras-like protein 1 (189 aa).

10–17 provides a ligand contact to GTP; the sequence is GAGGVGKS. The Effector region signature appears at 32-40; it reads YDPTIEDSY. Residues 57–61 and 116–119 contribute to the GTP site; these read DTAGQ and NKCD. Cysteine methyl ester is present on C186. C186 is lipidated: S-geranylgeranyl cysteine. The propeptide at 187–189 is removed in mature form; sequence KML.

It belongs to the small GTPase superfamily. Ras family.

Its subcellular location is the cell membrane. The catalysed reaction is GTP + H2O = GDP + phosphate + H(+). Alternates between an inactive form bound to GDP and an active form bound to GTP. Activated by a guanine nucleotide-exchange factor (GEF) and inactivated by a GTPase-activating protein (GAP). In terms of biological role, ras proteins bind GDP/GTP and possess intrinsic GTPase activity. Plays a role in eye development by regulating cell growth, survival of postmitotic ommatidial cells and differentiation of photoreceptor cells. During larval development, mediates Ptth/tor signaling leading to the production of ecdysone, a hormone required for the initiation of metamorphosis. The sequence is that of Ras-like protein 1 from Drosophila willistoni (Fruit fly).